The chain runs to 38 residues: Large ribosomal subunit protein bL36 (38 aa).

Belongs to the bacterial ribosomal protein bL36 family.

The protein is Large ribosomal subunit protein bL36 of Lactobacillus acidophilus (strain ATCC 700396 / NCK56 / N2 / NCFM).